A 495-amino-acid polypeptide reads, in one-letter code: Histidine--tRNA ligase (495 aa).

A compositionally biased stretch (polar residues) spans 1 to 10 (MTTDSEQPNT). The disordered stretch occupies residues 1 to 24 (MTTDSEQPNTDFRPEARAPRGFAD). The span at 12-24 (FRPEARAPRGFAD) shows a compositional bias: basic and acidic residues.

Belongs to the class-II aminoacyl-tRNA synthetase family. Homodimer.

The protein localises to the cytoplasm. The enzyme catalyses tRNA(His) + L-histidine + ATP = L-histidyl-tRNA(His) + AMP + diphosphate + H(+). This Caulobacter vibrioides (strain ATCC 19089 / CIP 103742 / CB 15) (Caulobacter crescentus) protein is Histidine--tRNA ligase (hisS).